A 118-amino-acid polypeptide reads, in one-letter code: V-type proton ATPase subunit G 3 (118 aa).

Positions 3–54 form a coiled coil; it reads SQSQGIQQLLQAEKRAKDKLEEAKKRKNKRLRQAKEEATADIDQYRLKREAD. Positions 19–39 are disordered; the sequence is KDKLEEAKKRKNKRLRQAKEE.

The protein belongs to the V-ATPase G subunit family. As to quaternary structure, V-ATPase is a heteromultimeric enzyme made up of two complexes: the ATP-hydrolytic V1 complex and the proton translocation V0 complex. The V1 complex consists of three catalytic AB heterodimers that form a heterohexamer, three peripheral stalks each consisting of EG heterodimers, one central rotor including subunits D and F, and the regulatory subunits C and H. The proton translocation complex V0 consists of the proton transport subunit a, a ring of proteolipid subunits c9c'', rotary subunit d, subunits e and f, and two accessory subunits.

Subunit of the V1 complex of vacuolar(H+)-ATPase (V-ATPase), a multisubunit enzyme composed of a peripheral complex (V1) that hydrolyzes ATP and a membrane integral complex (V0) that translocates protons. V-ATPase is responsible for acidifying and maintaining the pH of intracellular compartments and in some cell types, is targeted to the plasma membrane, where it is responsible for acidifying the extracellular environment. This Xenopus laevis (African clawed frog) protein is V-type proton ATPase subunit G 3 (atp6v1g3).